The primary structure comprises 548 residues: Probable malate:quinone oxidoreductase (548 aa).

Residues 520–548 (YDRPQAADSTPKPQLKPQPVQKEVADIAL) form a disordered region. Positions 530 to 541 (PKPQLKPQPVQK) are enriched in low complexity.

Belongs to the MQO family. FAD is required as a cofactor.

The enzyme catalyses (S)-malate + a quinone = a quinol + oxaloacetate. Its pathway is carbohydrate metabolism; tricarboxylic acid cycle; oxaloacetate from (S)-malate (quinone route): step 1/1. The chain is Probable malate:quinone oxidoreductase from Shigella dysenteriae serotype 1 (strain Sd197).